The chain runs to 507 residues: Maturase K (507 aa).

The protein belongs to the intron maturase 2 family. MatK subfamily.

It is found in the plastid. The protein localises to the chloroplast. Usually encoded in the trnK tRNA gene intron. Probably assists in splicing its own and other chloroplast group II introns. In Browningia hertlingiana (Cactus), this protein is Maturase K.